A 441-amino-acid chain; its full sequence is Chitinase-like protein Idgf3 (441 aa).

Positions 1-23 (MTGSLWLSLALSLAVLAQFKVSA) are cleaved as a signal peptide. The 417-residue stretch at 25–441 (PNLVCFYDSQ…MLRAIKYRLL (417 aa)) folds into the GH18 domain. Cys29 and Cys56 form a disulfide bridge. Asn221 carries an N-linked (GlcNAc...) asparagine glycan. Residues 309–331 (SGDSGMPVVPSTQGPAPAGPQSK) are disordered. An intrachain disulfide couples Cys342 to Cys425.

The protein belongs to the glycosyl hydrolase 18 family. IDGF subfamily. In terms of processing, glycosylated.

It is found in the secreted. Functionally, cooperates with insulin-like peptides to stimulate the proliferation, polarization and motility of imaginal disk cells. May act by stabilizing the binding of insulin-like peptides to its receptor through a simultaneous interaction with both molecules to form a multiprotein signaling complex. This Drosophila yakuba (Fruit fly) protein is Chitinase-like protein Idgf3 (Idgf3).